Reading from the N-terminus, the 155-residue chain is 2-C-methyl-D-erythritol 2,4-cyclodiphosphate synthase (155 aa).

Residues D10, H12, and H46 each contribute to the a divalent metal cation site. 10-12 (DSH) is a 4-CDP-2-C-methyl-D-erythritol 2-phosphate binding site. 4-CDP-2-C-methyl-D-erythritol 2-phosphate is bound by residues 60–62 (DIG), 65–69 (FDEND), and K140.

Belongs to the IspF family. As to quaternary structure, homotrimer. It depends on a divalent metal cation as a cofactor.

It catalyses the reaction 4-CDP-2-C-methyl-D-erythritol 2-phosphate = 2-C-methyl-D-erythritol 2,4-cyclic diphosphate + CMP. Its pathway is isoprenoid biosynthesis; isopentenyl diphosphate biosynthesis via DXP pathway; isopentenyl diphosphate from 1-deoxy-D-xylulose 5-phosphate: step 4/6. Functionally, involved in the biosynthesis of isopentenyl diphosphate (IPP) and dimethylallyl diphosphate (DMAPP), two major building blocks of isoprenoid compounds. Catalyzes the conversion of 4-diphosphocytidyl-2-C-methyl-D-erythritol 2-phosphate (CDP-ME2P) to 2-C-methyl-D-erythritol 2,4-cyclodiphosphate (ME-CPP) with a corresponding release of cytidine 5-monophosphate (CMP). This chain is 2-C-methyl-D-erythritol 2,4-cyclodiphosphate synthase, found in Mycoplasmoides gallisepticum (strain R(low / passage 15 / clone 2)) (Mycoplasma gallisepticum).